The primary structure comprises 211 residues: Dual specificity phosphatase 29 (211 aa).

Residues 47–192 form the Tyrosine-protein phosphatase domain; sequence HVNEVWPGIY…LRTLDIQLAI (146 aa). Substrate is bound at residue 136–143; the sequence is HCAMGRSR. The Phosphocysteine intermediate role is filled by Cys137.

Belongs to the protein-tyrosine phosphatase family. Non-receptor class dual specificity subfamily.

It localises to the cytoplasm. The protein localises to the nucleus. The enzyme catalyses O-phospho-L-tyrosyl-[protein] + H2O = L-tyrosyl-[protein] + phosphate. It catalyses the reaction O-phospho-L-seryl-[protein] + H2O = L-seryl-[protein] + phosphate. It carries out the reaction O-phospho-L-threonyl-[protein] + H2O = L-threonyl-[protein] + phosphate. Its function is as follows. Dual specificity phosphatase able to dephosphorylate phosphotyrosine, phosphoserine and phosphothreonine residues within the same substrate, with a preference for phosphotyrosine as a substrate. Involved in the modulation of AMPK and MAPK1/2 signaling pathways. The sequence is that of Dual specificity phosphatase 29 (dusp29) from Callorhinchus milii (Ghost shark).